A 241-amino-acid polypeptide reads, in one-letter code: Biosynthetic peptidoglycan transglycosylase (241 aa).

The chain crosses the membrane as a helical span at residues 18 to 38; the sequence is GVIGIIALWMAGILIFAFLPV.

Belongs to the glycosyltransferase 51 family.

It is found in the cell inner membrane. The catalysed reaction is [GlcNAc-(1-&gt;4)-Mur2Ac(oyl-L-Ala-gamma-D-Glu-L-Lys-D-Ala-D-Ala)](n)-di-trans,octa-cis-undecaprenyl diphosphate + beta-D-GlcNAc-(1-&gt;4)-Mur2Ac(oyl-L-Ala-gamma-D-Glu-L-Lys-D-Ala-D-Ala)-di-trans,octa-cis-undecaprenyl diphosphate = [GlcNAc-(1-&gt;4)-Mur2Ac(oyl-L-Ala-gamma-D-Glu-L-Lys-D-Ala-D-Ala)](n+1)-di-trans,octa-cis-undecaprenyl diphosphate + di-trans,octa-cis-undecaprenyl diphosphate + H(+). It participates in cell wall biogenesis; peptidoglycan biosynthesis. Peptidoglycan polymerase that catalyzes glycan chain elongation from lipid-linked precursors. The protein is Biosynthetic peptidoglycan transglycosylase of Yersinia pestis bv. Antiqua (strain Antiqua).